The primary structure comprises 534 residues: Anther-specific proline-rich protein APG (534 aa).

The signal sequence occupies residues 1-35; the sequence is MKRSSLVDSCSYSRIFRSIFCLLSFCIFFLTTTNA. Residues 59 to 196 are compositionally biased toward pro residues; sequence NPPTPDPSPK…SPKPAPSPPK (138 aa). The tract at residues 59 to 202 is disordered; sequence NPPTPDPSPK…SPPKPENKTI (144 aa). The Nucleophile role is filled by S211. Residues D508 and H511 contribute to the active site.

It belongs to the 'GDSL' lipolytic enzyme family. As to expression, found in sporophytic and gametophytic cell types in the anther, only in male fertile plants.

The chain is Anther-specific proline-rich protein APG (APG) from Arabidopsis thaliana (Mouse-ear cress).